Here is a 558-residue protein sequence, read N- to C-terminus: Inositol-3-phosphate synthase 1 (558 aa).

Positions 67, 68, 69, 70, 141, 177, 178, 188, 191, 228, 229, 230, 231, 278, 279, 303, 306, 337, 338, 339, and 352 each coordinate NAD(+). At serine 279 the chain carries Phosphoserine. Serine 357 is subject to Phosphoserine. NAD(+) is bound by residues glycine 390, aspartate 391, aspartate 419, and serine 420. Positions 537 to 558 (ATNGCTGDANGHLQEEPPMPTT) are disordered.

Belongs to the myo-inositol 1-phosphate synthase family. It depends on NAD(+) as a cofactor. Post-translationally, phosphorylation at Ser-279 and Ser-357 may be associated with a decrease in activity. In terms of tissue distribution, highly expressed in testis, ovary, heart, placenta and pancreas. Weakly expressed in blood leukocyte, thymus, skeletal muscle and colon.

The protein resides in the cytoplasm. It catalyses the reaction D-glucose 6-phosphate = 1D-myo-inositol 3-phosphate. Its pathway is polyol metabolism; myo-inositol biosynthesis; myo-inositol from D-glucose 6-phosphate: step 1/2. With respect to regulation, inhibited by mood-stabilizing drugs such as valproate (VPA) and lithium. In terms of biological role, key enzyme in myo-inositol biosynthesis pathway that catalyzes the conversion of glucose 6-phosphate to 1-myo-inositol 1-phosphate in a NAD-dependent manner. Rate-limiting enzyme in the synthesis of all inositol-containing compounds. The sequence is that of Inositol-3-phosphate synthase 1 (ISYNA1) from Homo sapiens (Human).